Consider the following 599-residue polypeptide: Afamin (599 aa).

The N-terminal stretch at 1 to 21 (MKLLKLTGFIFFLFFLTESLT) is a signal peptide. Albumin domains follow at residues 22–210 (LPTQ…IPVT), 211–403 (QYLK…KFNE), and 404–599 (TTEK…KIGN). Residue N33 is glycosylated (N-linked (GlcNAc...) (complex) asparagine). Disulfide bonds link C77-C86, C99-C114, C113-C124, C148-C193, C192-C201, C224-C270, C269-C277, C289-C303, C302-C313, C340-C385, and C384-C393. N109 is a glycosylation site (N-linked (GlcNAc...) (complex) asparagine). Residues 215–319 (AFSSYQKHVC…RGQCIINSNK (105 aa)) form a binding pocket for hydrophobic ligands region. N383 carries an N-linked (GlcNAc...) (complex) asparagine; atypical glycan. N-linked (GlcNAc...) (complex) asparagine glycosylation occurs at N402. 6 disulfide bridges follow: C416–C462, C461–C470, C483–C499, C498–C509, C536–C581, and C580–C589. Residue N488 is glycosylated (N-linked (GlcNAc...) asparagine).

The protein belongs to the ALB/AFP/VDB family. Forms a 1:1 complex with Wnt family members; interacts with WNT1, WNT2B, WNT3, WNT3A, WNT5A, WNT7A, WNT7B, WNT8, WNT9A, WNT9B, WNT10A and WNT10B. In terms of processing, N-glycosylated; more than 90% of the glycans are sialylated. High level detected in plasma but also in extravascular fluids such as follicular and cerebrospinal fluids (at protein level).

It is found in the secreted. Functionally, functions as a carrier for hydrophobic molecules in body fluids. Essential for the solubility and activity of lipidated Wnt family members, including WNT1, WNT2B, WNT3, WNT3A, WNT5A, WNT7A, WNT7B, WNT8, WNT9A, WNT9B, WNT10A and WNT10B. Binds vitamin E. May transport vitamin E in body fluids under conditions where the lipoprotein system is not sufficient. May be involved in the transport of vitamin E across the blood-brain barrier. This Homo sapiens (Human) protein is Afamin (AFM).